The chain runs to 251 residues: Zinc import ATP-binding protein ZnuC (251 aa).

The 216-residue stretch at 5–220 (VSLENVSVSF…PEFISMFGPR (216 aa)) folds into the ABC transporter domain. 37–44 (GPNGAGKS) contributes to the ATP binding site.

The protein belongs to the ABC transporter superfamily. Zinc importer (TC 3.A.1.15.5) family. As to quaternary structure, the complex is composed of two ATP-binding proteins (ZnuC), two transmembrane proteins (ZnuB) and a solute-binding protein (ZnuA).

The protein localises to the cell inner membrane. The enzyme catalyses Zn(2+)(out) + ATP(in) + H2O(in) = Zn(2+)(in) + ADP(in) + phosphate(in) + H(+)(in). In terms of biological role, part of the ABC transporter complex ZnuABC involved in zinc import. Responsible for energy coupling to the transport system. Seems to be important for the virulence. This chain is Zinc import ATP-binding protein ZnuC, found in Salmonella typhimurium (strain LT2 / SGSC1412 / ATCC 700720).